The primary structure comprises 263 residues: Undecaprenyl-diphosphatase 2 (263 aa).

Transmembrane regions (helical) follow at residues 15–37 (GLTE…LIGF), 42–62 (AKVF…VIFW), 79–99 (SLNL…GVLF), 107–127 (LFGP…MIVA), 142–162 (ITYK…WPGF), 183–203 (AEYT…LDLI), 216–236 (LFVT…VSFL), and 242–262 (VKLT…YFFI).

This sequence belongs to the UppP family.

The protein resides in the cell membrane. It carries out the reaction di-trans,octa-cis-undecaprenyl diphosphate + H2O = di-trans,octa-cis-undecaprenyl phosphate + phosphate + H(+). Its function is as follows. Catalyzes the dephosphorylation of undecaprenyl diphosphate (UPP). Confers resistance to bacitracin. The polypeptide is Undecaprenyl-diphosphatase 2 (Bacillus cereus (strain ATCC 14579 / DSM 31 / CCUG 7414 / JCM 2152 / NBRC 15305 / NCIMB 9373 / NCTC 2599 / NRRL B-3711)).